Consider the following 213-residue polypeptide: Cytochrome c biogenesis ATP-binding export protein CcmA (213 aa).

In terms of domain architecture, ABC transporter spans 3 to 211 (LTAENLGVRR…QMTGFAGVET (209 aa)). 35–42 (GRNGSGKS) contributes to the ATP binding site.

Belongs to the ABC transporter superfamily. CcmA exporter (TC 3.A.1.107) family. In terms of assembly, the complex is composed of two ATP-binding proteins (CcmA) and two transmembrane proteins (CcmB).

The protein resides in the cell inner membrane. It catalyses the reaction heme b(in) + ATP + H2O = heme b(out) + ADP + phosphate + H(+). Part of the ABC transporter complex CcmAB involved in the biogenesis of c-type cytochromes; once thought to export heme, this seems not to be the case, but its exact role is uncertain. Responsible for energy coupling to the transport system. This is Cytochrome c biogenesis ATP-binding export protein CcmA from Agrobacterium fabrum (strain C58 / ATCC 33970) (Agrobacterium tumefaciens (strain C58)).